We begin with the raw amino-acid sequence, 66 residues long: Photosystem II reaction center protein H (66 aa).

The chain crosses the membrane as a helical span at residues 27 to 47 (GAVPVMTVIGLLLLVFLVILL).

This sequence belongs to the PsbH family. PSII is composed of 1 copy each of membrane proteins PsbA, PsbB, PsbC, PsbD, PsbE, PsbF, PsbH, PsbI, PsbJ, PsbK, PsbL, PsbM, PsbT, PsbX, PsbY, Psb30/Ycf12, peripheral proteins PsbO, CyanoQ (PsbQ), PsbU, PsbV and a large number of cofactors. It forms dimeric complexes.

It is found in the cellular thylakoid membrane. One of the components of the core complex of photosystem II (PSII), required for its stability and/or assembly. PSII is a light-driven water:plastoquinone oxidoreductase that uses light energy to abstract electrons from H(2)O, generating O(2) and a proton gradient subsequently used for ATP formation. It consists of a core antenna complex that captures photons, and an electron transfer chain that converts photonic excitation into a charge separation. This Prochlorococcus marinus (strain MIT 9215) protein is Photosystem II reaction center protein H.